The following is a 317-amino-acid chain: UV DNA damage endonuclease (317 aa).

It belongs to the uve1/UvsE family.

Functionally, component in a DNA repair pathway. Removal of UV LIGHT damaged nucleotides. Recognizes pyrimidine dimers and cleave a phosphodiester bond immediately 5' to the lesion. The chain is UV DNA damage endonuclease from Bacillus cereus (strain G9842).